Reading from the N-terminus, the 132-residue chain is Myelin P2 protein (132 aa).

An N-acetylserine modification is found at Ser2. Residues Arg107 and 127-129 contribute to the (9Z)-octadecenoate site; that span reads RIY. Residues Arg107 and 127-129 contribute to the hexadecanoate site; that span reads RIY.

This sequence belongs to the calycin superfamily. Fatty-acid binding protein (FABP) family. Monomer.

It localises to the cytoplasm. Its function is as follows. May play a role in lipid transport protein in Schwann cells. May bind cholesterol. The protein is Myelin P2 protein (Pmp2) of Mus musculus (Mouse).